The following is a 556-amino-acid chain: Portal protein (556 aa).

The interval 527 to 556 (AQGAKTLSETQTSDPSALTAIANAAGAPQQ) is disordered. Positions 533-542 (LSETQTSDPS) are enriched in polar residues.

The protein belongs to the podoviridae head-to-tail connector protein family. Homododecamer.

It is found in the virion. In terms of biological role, forms the portal vertex of the capsid. This portal plays critical roles in head assembly, genome packaging, neck/tail attachment, and genome ejection. The portal protein multimerizes as a single ring-shaped homododecamer arranged around a central channel. In Salmonella phage epsilon15, this protein is Portal protein.